The sequence spans 159 residues: Transcription elongation factor A protein-like 1 (159 aa).

Positions 1 to 97 (MDKPRKENEE…PPCGVGKHKL (97 aa)) are disordered. Over residues 17–34 (KTDEERPPVEHSPEKQSP) the composition is skewed to basic and acidic residues. 6 positions are modified to phosphoserine: serine 28, serine 33, serine 38, serine 39, serine 43, and serine 44. Over residues 37-54 (QSSEEQSSEEEFFPEELL) the composition is skewed to acidic residues. Positions 64–80 (SEERPPQEGLSRKDLFE) are enriched in basic and acidic residues.

The protein belongs to the TFS-II family. TFA subfamily. In terms of processing, phosphorylation of Ser-38 and Ser-39 is critical for transcriptional repression. As to expression, expressed in all tissues examined. Highly expressed in heart, ovary, prostate and skeletal muscle. Moderately expressed in brain, placenta, testis and small intestine. Weakly expressed in lung, liver and spleen. Expressed in several cancer cell lines.

It localises to the nucleus. Its function is as follows. May be involved in transcriptional regulation. Modulates various viral and cellular promoters in a promoter context-dependent manner. For example, transcription from the FOS promoter is increased, while Rous sarcoma virus (RSV) long terminal repeat (LTR) promoter activity is repressed. Does not bind DNA directly. This is Transcription elongation factor A protein-like 1 from Homo sapiens (Human).